Reading from the N-terminus, the 388-residue chain is Methylthioribose-1-phosphate isomerase (388 aa).

Aspartate 258 (proton donor) is an active-site residue.

Belongs to the eIF-2B alpha/beta/delta subunits family. MtnA subfamily.

The protein localises to the cytoplasm. It localises to the nucleus. The enzyme catalyses 5-(methylsulfanyl)-alpha-D-ribose 1-phosphate = 5-(methylsulfanyl)-D-ribulose 1-phosphate. It functions in the pathway amino-acid biosynthesis; L-methionine biosynthesis via salvage pathway; L-methionine from S-methyl-5-thio-alpha-D-ribose 1-phosphate: step 1/6. Catalyzes the interconversion of methylthioribose-1-phosphate (MTR-1-P) into methylthioribulose-1-phosphate (MTRu-1-P). The polypeptide is Methylthioribose-1-phosphate isomerase (mri-1) (Neurospora crassa (strain ATCC 24698 / 74-OR23-1A / CBS 708.71 / DSM 1257 / FGSC 987)).